Here is a 290-residue protein sequence, read N- to C-terminus: Carbonic anhydrase-related protein (290 aa).

A Phosphoserine modification is found at serine 5. In terms of domain architecture, Alpha-carbonic anhydrase spans valine 27–phenylalanine 289. Histidine 87 serves as the catalytic Proton donor/acceptor. Zn(2+)-binding residues include histidine 118 and histidine 141.

Belongs to the alpha-carbonic anhydrase family.

Its function is as follows. Does not have a carbonic anhydrase catalytic activity. In Rattus norvegicus (Rat), this protein is Carbonic anhydrase-related protein (Ca8).